The primary structure comprises 449 residues: Exodeoxyribonuclease 7 large subunit (449 aa).

The protein belongs to the XseA family. As to quaternary structure, heterooligomer composed of large and small subunits.

The protein localises to the cytoplasm. The catalysed reaction is Exonucleolytic cleavage in either 5'- to 3'- or 3'- to 5'-direction to yield nucleoside 5'-phosphates.. Functionally, bidirectionally degrades single-stranded DNA into large acid-insoluble oligonucleotides, which are then degraded further into small acid-soluble oligonucleotides. In Salmonella paratyphi A (strain ATCC 9150 / SARB42), this protein is Exodeoxyribonuclease 7 large subunit.